The chain runs to 695 residues: Protein VP3 (695 aa).

The interval 187–255 (FMRLLRMRFA…RVSELKGSGS (69 aa)) is N7-methyltransferase activity. The 2'-O-methyltransferase activity stretch occupies residues 256–432 (YSEKKISEFD…KRPKIKITKS (177 aa)). The N7-methyltransferase activity stretch occupies residues 433-559 (LAYGAINTIF…NHIYIIPNAR (127 aa)). The tract at residues 560–695 (DDDNFDTFAS…MEIWDVQTWG (136 aa)) is GTase/RTPase activity.

It belongs to the rotavirus VP3 family. Interacts with VP1. Interacts with VP2.

Its subcellular location is the virion. It catalyses the reaction a 5'-end diphospho-ribonucleoside in mRNA + GTP + H(+) = a 5'-end (5'-triphosphoguanosine)-ribonucleoside in mRNA + diphosphate. It carries out the reaction a 5'-end (5'-triphosphoguanosine)-ribonucleoside in mRNA + S-adenosyl-L-methionine = a 5'-end (N(7)-methyl 5'-triphosphoguanosine)-ribonucleoside in mRNA + S-adenosyl-L-homocysteine. Functionally, multifunctional enzyme involved in mRNA capping. Catalyzes the formation of the 5' cap structure on the viral plus-strand transcripts. Specifically binds to GTP and displays guanylyltransferase and methyltransferase activities. Has affinity for ssRNA but not for dsRNA. Capping activity is non-specific and caps RNAs that initiate with either a G or an A residue. Together with VP1 polymerase, forms a VP1-VP3 complex positioned near the channels situated at each of the five-fold vertices of the core. Following infection, the outermost layer of the virus is lost, leaving a double-layered particle (DLP) made up of the core and VP6 shell. VP1 then catalyzes the transcription of fully conservative plus-strand genomic RNAs that are capped by VP3 and extruded through the DLP's channels into the cytoplasm where they function as mRNAs for translation of viral proteins. DLPs probably have an RNA triphosphatase activity as well, whereas open cores do not. The chain is Protein VP3 from Rotavirus C (isolate RVC/Cow/Japan/Shintoku/1991/G2P[3]) (RV-C).